Consider the following 407-residue polypeptide: Chorismate synthase (407 aa).

Residues Arg43 and Arg49 each coordinate NADP(+). FMN-binding positions include 143 to 145, 264 to 265, Gly308, 323 to 327, and Arg349; these read RSS, QA, and KPIST.

It belongs to the chorismate synthase family. As to quaternary structure, homotetramer. Requires FMNH2 as cofactor.

The catalysed reaction is 5-O-(1-carboxyvinyl)-3-phosphoshikimate = chorismate + phosphate. The protein operates within metabolic intermediate biosynthesis; chorismate biosynthesis; chorismate from D-erythrose 4-phosphate and phosphoenolpyruvate: step 7/7. Catalyzes the anti-1,4-elimination of the C-3 phosphate and the C-6 proR hydrogen from 5-enolpyruvylshikimate-3-phosphate (EPSP) to yield chorismate, which is the branch point compound that serves as the starting substrate for the three terminal pathways of aromatic amino acid biosynthesis. This reaction introduces a second double bond into the aromatic ring system. This Corynebacterium efficiens (strain DSM 44549 / YS-314 / AJ 12310 / JCM 11189 / NBRC 100395) protein is Chorismate synthase.